The chain runs to 141 residues: Endoribonuclease YbeY (141 aa).

The Zn(2+) site is built by histidine 100, histidine 104, and histidine 110.

This sequence belongs to the endoribonuclease YbeY family. The cofactor is Zn(2+).

Its subcellular location is the cytoplasm. In terms of biological role, single strand-specific metallo-endoribonuclease involved in late-stage 70S ribosome quality control and in maturation of the 3' terminus of the 16S rRNA. The chain is Endoribonuclease YbeY from Helicobacter pylori (strain J99 / ATCC 700824) (Campylobacter pylori J99).